Reading from the N-terminus, the 539-residue chain is MGFNVVVFLSCLLLLPPVTFGSNMERTTLVIDGSRRIAETDENFICATLDWWPPEKCNYDQCPWGYASLINLNLASPLLAKAIQAFRTLRIRIGGSLQDQVIYDVGDLKTPCTQFKKTDDGLFGFSEGCLYMKRWDEVNHFFNATGAIVTFGLNALHGRNKLNGTAWGGDWDHTNTQDFMNYTVSKGYAIDSWEFGNELSGSGIWASVSVELYGKDLIVLKNVIKNVYKNSRTKPLVVAPGGFFEEQWYSELLRLSGPGVLDVLTHHIYNLGPGNDPKLVNKILDPNYLSGISELFANVNQTIQEHGPWAAAWVGEAGGAFNSGGRQVSETFINSFWYLDQLGISSKHNTKVYCRQALVGGFYGLLEKETFVPNPDYYSALLWHRLMGKGILGVQTTASEYLRAYVHCSKRRAGITILLINLSKHTTFTVAVSNGVKVVLQAESMKRKSFLETIKSKVSWVGNKASDGYLNREEYHLSPKDGDLRSKIMLLNGKPLVPTATGDIPKLEPVRHGVKSPVYINPLSISFIVLPTFDAPACS.

Positions 1 to 21 (MGFNVVVFLSCLLLLPPVTFG) are cleaved as a signal peptide. 3 N-linked (GlcNAc...) asparagine glycosylation sites follow: Asn143, Asn163, and Asn181. The active-site Proton donor is Glu198. An N-linked (GlcNAc...) asparagine glycan is attached at Asn300. The active-site Nucleophile is Glu316. A glycan (N-linked (GlcNAc...) asparagine) is linked at Asn421.

Belongs to the glycosyl hydrolase 79 family.

The protein resides in the lysosome membrane. It is found in the secreted. Functionally, endoglycosidase which is a cell surface and extracellular matrix-degrading enzyme. Cleaves heparan sulfate proteoglycans (HSPGs) into heparan sulfate side chains and core proteoglycans. The polypeptide is Heparanase-like protein 2 (Arabidopsis thaliana (Mouse-ear cress)).